A 354-amino-acid polypeptide reads, in one-letter code: Magnesium-protoporphyrin IX monomethyl ester [oxidative] cyclase (354 aa).

This sequence belongs to the AcsF family. Fe cation serves as cofactor.

The protein localises to the plastid. Its subcellular location is the chloroplast. It carries out the reaction Mg-protoporphyrin IX 13-monomethyl ester + 3 NADPH + 3 O2 + 2 H(+) = 3,8-divinyl protochlorophyllide a + 3 NADP(+) + 5 H2O. It functions in the pathway porphyrin-containing compound metabolism; chlorophyll biosynthesis (light-independent). Its function is as follows. Catalyzes the formation of the isocyclic ring in chlorophyll biosynthesis. Mediates the cyclase reaction, which results in the formation of divinylprotochlorophyllide (Pchlide) characteristic of all chlorophylls from magnesium-protoporphyrin IX 13-monomethyl ester (MgPMME). The protein is Magnesium-protoporphyrin IX monomethyl ester [oxidative] cyclase of Cyanidium caldarium (Red alga).